The primary structure comprises 630 residues: Cytochrome B pre-mRNA-processing protein 2 (630 aa).

Its subcellular location is the mitochondrion. Its function is as follows. Appears to be specifically required for the splicing of the terminal intron (bI5) of the cytochrome b pre-mRNA. Can also stimulates the splicing of the omega intron of the precursor of large ribosomal RNA. The protein is Cytochrome B pre-mRNA-processing protein 2 (CBP2) of Saccharomyces paradoxus (Yeast).